The chain runs to 387 residues: 3-ketoacyl-CoA thiolase (387 aa).

Catalysis depends on Cys91, which acts as the Acyl-thioester intermediate. Residues His343 and Cys373 each act as proton acceptor in the active site.

It belongs to the thiolase-like superfamily. Thiolase family. Heterotetramer of two alpha chains (FadB) and two beta chains (FadA).

It is found in the cytoplasm. It catalyses the reaction an acyl-CoA + acetyl-CoA = a 3-oxoacyl-CoA + CoA. It participates in lipid metabolism; fatty acid beta-oxidation. Functionally, catalyzes the final step of fatty acid oxidation in which acetyl-CoA is released and the CoA ester of a fatty acid two carbons shorter is formed. This is 3-ketoacyl-CoA thiolase from Yersinia pseudotuberculosis serotype O:1b (strain IP 31758).